The following is a 613-amino-acid chain: WD40 repeat-containing protein HOS15 (613 aa).

Residues 5–37 (TSVELNFLVFRYLQESGFTHAAFTLGYEAGINK) enclose the LisH domain. Disordered stretches follow at residues 101-174 (KKRK…REKM) and 193-214 (EIEREREREKIEREKSHEKQLG). WD repeat units lie at residues 263 to 302 (GHTSEVCACAWSPSASLLASGSGDATARIWSIPEGSFKAV), 322 to 362 (EKSK…STLS), 363 to 402 (KHKGPIFSLKWNKKGDYLLTGSVDRTAVVWDVKAEEWKQQ), 405 to 443 (FHSGPTLDVDWRNNVSFATSSTDSMIYLCKIGETRPAKT), 446 to 485 (GHQGEVNCVKWDPTGSLLASCSDDSTAKIWNIKQSTFVHD), 488 to 536 (EHTK…MLCS), 539 to 580 (GHRE…KTYT), and 582 to 613 (NGGIFEVCWNKEGNKIAACFADNSVCVLDFRM).

It localises to the nucleus. Acts as a repressor of cold stress-regulated gene expression. Interacts specifically with and promotes deacetylation of histone H4. Plays a role in gene regulation for plant acclimation and tolerance to cold stress. This chain is WD40 repeat-containing protein HOS15, found in Arabidopsis thaliana (Mouse-ear cress).